The chain runs to 410 residues: DNA primase small subunit (410 aa).

Active-site residues include Glu-43, Asp-106, and Asp-108. Residues 118–129 (CCKDATVCPKCW) carry the Zinc knuckle motif motif.

This sequence belongs to the eukaryotic-type primase small subunit family. As to quaternary structure, heterodimer of a small subunit and a large subunit.

DNA primase is the polymerase that synthesizes small RNA primers for the Okazaki fragments made during discontinuous DNA replication. The protein is DNA primase small subunit (pri-1) of Caenorhabditis elegans.